A 433-amino-acid polypeptide reads, in one-letter code: Adenosylhomocysteinase A (433 aa).

Substrate is bound by residues Thr57, Asp132, Glu157, Lys187, and Asp191. The NAD binding stretch occupies residues 184 to 351; that stretch reads SVTKSKFDNL…EGRLVNLGCA (168 aa).

It belongs to the adenosylhomocysteinase family. As to quaternary structure, homotetramer. NAD(+) is required as a cofactor.

It localises to the cytoplasm. The enzyme catalyses S-adenosyl-L-homocysteine + H2O = L-homocysteine + adenosine. It functions in the pathway amino-acid biosynthesis; L-homocysteine biosynthesis; L-homocysteine from S-adenosyl-L-homocysteine: step 1/1. Its function is as follows. Catalyzes the hydrolysis of S-adenosyl-L-homocysteine to form adenosine and homocysteine. Binds copper ions. The polypeptide is Adenosylhomocysteinase A (ahcy-a) (Xenopus laevis (African clawed frog)).